The chain runs to 395 residues: 3-sulfinopropanoyl-CoA desulfinase (395 aa).

FAD-binding positions include 121 to 124 (ICIS), Ser-130, and 153 to 156 (YWIT). Residue 243–244 (YN) coordinates substrate. FAD is bound by residues Arg-272, Gln-339, Ser-343, 366–370 (GGTAQ), and Gln-387.

The protein belongs to the acyl-CoA dehydrogenase family. In terms of assembly, homotrimer or homotetramer. FAD serves as cofactor.

The enzyme catalyses 3-sulfinopropanoyl-CoA + H2O = propanoyl-CoA + sulfite + H(+). Its function is as follows. Catalyzes the conversion 3-sulfinopropanoyl-CoA (3SP-CoA) to propanoyl-CoA by abstraction of sulfite. Does not show dehydrogenase activity. The chain is 3-sulfinopropanoyl-CoA desulfinase from Cupriavidus necator (strain ATCC 43291 / DSM 13513 / CCUG 52238 / LMG 8453 / N-1) (Ralstonia eutropha).